Here is a 1279-residue protein sequence, read N- to C-terminus: ATP-dependent helicase/nuclease subunit A (1279 aa).

One can recognise a UvrD-like helicase ATP-binding domain in the interval 4–499; sequence TKWTDEQRQA…VKLFKNFRSR (496 aa). 25–32 contacts ATP; it reads AGAGAGKT. One can recognise a UvrD-like helicase C-terminal domain in the interval 526–853; it reads EEALKVGASY…RIMSIHKSKG (328 aa).

This sequence belongs to the helicase family. AddA subfamily. As to quaternary structure, heterodimer of AddA and AddB/RexB. It depends on Mg(2+) as a cofactor.

It carries out the reaction Couples ATP hydrolysis with the unwinding of duplex DNA by translocating in the 3'-5' direction.. The enzyme catalyses ATP + H2O = ADP + phosphate + H(+). Functionally, the heterodimer acts as both an ATP-dependent DNA helicase and an ATP-dependent, dual-direction single-stranded exonuclease. Recognizes the chi site generating a DNA molecule suitable for the initiation of homologous recombination. The AddA nuclease domain is required for chi fragment generation; this subunit has the helicase and 3' -&gt; 5' nuclease activities. This Clostridium botulinum (strain Langeland / NCTC 10281 / Type F) protein is ATP-dependent helicase/nuclease subunit A.